The following is a 248-amino-acid chain: 2,3-bisphosphoglycerate-dependent phosphoglycerate mutase (248 aa).

Substrate is bound by residues 8-15 (RHGESTWN), 21-22 (TG), Arg60, 87-90 (ERHY), Lys98, 114-115 (RR), and 183-184 (GN). His9 (tele-phosphohistidine intermediate) is an active-site residue. Glu87 functions as the Proton donor/acceptor in the catalytic mechanism.

It belongs to the phosphoglycerate mutase family. BPG-dependent PGAM subfamily. In terms of assembly, homodimer.

The catalysed reaction is (2R)-2-phosphoglycerate = (2R)-3-phosphoglycerate. Its pathway is carbohydrate degradation; glycolysis; pyruvate from D-glyceraldehyde 3-phosphate: step 3/5. Its function is as follows. Catalyzes the interconversion of 2-phosphoglycerate and 3-phosphoglycerate. The chain is 2,3-bisphosphoglycerate-dependent phosphoglycerate mutase from Cupriavidus pinatubonensis (strain JMP 134 / LMG 1197) (Cupriavidus necator (strain JMP 134)).